The sequence spans 472 residues: UDP-glycosyltransferase 2 (472 aa).

Residues S283, 348–349 (WA), 366–374 (HCGWNSVLE), and 388–391 (YAEQ) each bind UDP-alpha-D-glucose.

Belongs to the UDP-glycosyltransferase family. Highly expressed in roots. Expressed in leaves and stems.

Functionally, glycosyltransferase that possesses isoflavonoids 4'-O- and 7-O-glucosyltransferase activities. Shows a successive glucosylation toward the acceptors producing their corresponding 4',7-O-diglucosides. Can use genistein, formononetin, daidzein, liquiritigenin and naringenin as substrates. Also shows a 3'-O-glucosylation activity in vitro. The chain is UDP-glycosyltransferase 2 from Pueraria montana var. lobata (Kudzu vine).